A 98-amino-acid chain; its full sequence is Sec-independent protein translocase protein TatA (98 aa).

The helical transmembrane segment at 1 to 21 (MGAMSPWHWAIVALVVVILFG) threads the bilayer. Residues 43–98 (VKEMQNDNSTPAPTAQSAPPPQSAPAELPVADTTTAPVTPPAPVQPQSQHTEPKSA) are disordered. Low complexity predominate over residues 66–79 (APAELPVADTTTAP).

It belongs to the TatA/E family. The Tat system comprises two distinct complexes: a TatABC complex, containing multiple copies of TatA, TatB and TatC subunits, and a separate TatA complex, containing only TatA subunits. Substrates initially bind to the TatABC complex, which probably triggers association of the separate TatA complex to form the active translocon.

Its subcellular location is the cell membrane. Its function is as follows. Part of the twin-arginine translocation (Tat) system that transports large folded proteins containing a characteristic twin-arginine motif in their signal peptide across membranes. TatA could form the protein-conducting channel of the Tat system. The polypeptide is Sec-independent protein translocase protein TatA (Rhodococcus erythropolis (Arthrobacter picolinophilus)).